Consider the following 141-residue polypeptide: VLSDNDKTNVKATWSKVGDHASDYVAEALERMFFSFPTTKTYFPHFDLGHGSGQVKAHGKKVGEALTQAVGHLDDLPSALSALSDLHAHKLRVDPVNFKLLSHCLLVTLSSHQPTEFTPEVHASLDKFLSNVSTVLTSKYR.

The region spanning 1–141 is the Globin domain; it reads VLSDNDKTNV…VSTVLTSKYR (141 aa). At S3 the chain carries Phosphoserine. Position 7 is an N6-succinyllysine (K7). The residue at position 8 (T8) is a Phosphothreonine. Position 11 is an N6-succinyllysine (K11). K16 carries the N6-acetyllysine; alternate modification. K16 is subject to N6-succinyllysine; alternate. Y24 carries the phosphotyrosine modification. S35 is subject to Phosphoserine. Residue K40 is modified to N6-succinyllysine. H58 provides a ligand contact to O2. Position 87 (H87) interacts with heme b. S102 bears the Phosphoserine mark. T108 is modified (phosphothreonine). S124 is subject to Phosphoserine. A phosphothreonine mark is found at T134 and T137. Phosphoserine is present on S138.

The protein belongs to the globin family. In terms of assembly, heterotetramer of two alpha chains and two beta chains. Red blood cells.

Functionally, involved in oxygen transport from the lung to the various peripheral tissues. Hemopressin acts as an antagonist peptide of the cannabinoid receptor CNR1. Hemopressin-binding efficiently blocks cannabinoid receptor CNR1 and subsequent signaling. The polypeptide is Hemoglobin subunit alpha (HBA) (Loxodonta africana (African elephant)).